Consider the following 401-residue polypeptide: S-adenosylmethionine synthase (401 aa).

An ATP-binding site is contributed by 136–141 (GQGSVD).

This sequence belongs to the AdoMet synthase 2 family. Requires Mg(2+) as cofactor.

It catalyses the reaction L-methionine + ATP + H2O = S-adenosyl-L-methionine + phosphate + diphosphate. It participates in amino-acid biosynthesis; S-adenosyl-L-methionine biosynthesis; S-adenosyl-L-methionine from L-methionine: step 1/1. Its function is as follows. Catalyzes the formation of S-adenosylmethionine from methionine and ATP. The protein is S-adenosylmethionine synthase of Pyrococcus furiosus (strain ATCC 43587 / DSM 3638 / JCM 8422 / Vc1).